The primary structure comprises 154 residues: Large ribosomal subunit protein bL9 (154 aa).

It belongs to the bacterial ribosomal protein bL9 family.

In terms of biological role, binds to the 23S rRNA. The chain is Large ribosomal subunit protein bL9 from Buchnera aphidicola subsp. Baizongia pistaciae (strain Bp).